The sequence spans 690 residues: Crooked neck-like protein 1 (690 aa).

HAT repeat units lie at residues 61–93, 95–127, 129–161, 163–194, 196–227, 229–264, 266–300, 310–342, 344–378, 388–424, 459–491, 493–527, 529–560, 565–606, 608–646, and 648–673; these read DYKL…WEES, KEIQ…MEMK, RQVN…MEEM, GNVA…FELR, KEVE…FEEK, AYFA…FEEN, KEFE…FEKK, IIVS…LVES, AEAD…LWVN, KDPE…FEIR, REFD…LETI, GDIE…FEIE, EETE…FELS, GSVA…EFGT, SDKE…YIFP, and DAAN…EREA. The mediates interaction with HSP90 stretch occupies residues 250-467; it reads MDEHLYVAFA…LREFDRCRKL (218 aa). Phosphoserine is present on Ser-342. A Nuclear localization signal motif is present at residues 618–626; that stretch reads PEKVKKRRK. Basic and acidic residues predominate over residues 667–679; that stretch reads QQQEREAAEQDPD. The tract at residues 667-690 is disordered; sequence QQQEREAAEQDPDKDIDESESSSF. Over residues 680–690 the composition is skewed to acidic residues; that stretch reads KDIDESESSSF. Position 689 is a phosphoserine (Ser-689).

Belongs to the crooked-neck family. Identified in the spliceosome C complex. Present in a spliceosome complex assembled in vitro containing CRNKL1, HPRP8BP and SNRPB2. Component of the minor spliceosome, which splices U12-type introns. Interacts with PPIL2 (via the PPIase cyclophilin-type domain); they may form a trimeric complex with HSP90.

The protein resides in the nucleus. It localises to the nucleus speckle. Involved in pre-mRNA splicing process. As a component of the minor spliceosome, involved in the splicing of U12-type introns in pre-mRNAs. The chain is Crooked neck-like protein 1 (Crnkl1) from Mus musculus (Mouse).